The primary structure comprises 231 residues: 7-cyano-7-deazaguanine synthase (231 aa).

Position 11 to 21 (11 to 21 (LSGGLDSATTM)) interacts with ATP. The Zn(2+) site is built by cysteine 195, cysteine 205, cysteine 208, and cysteine 211.

This sequence belongs to the QueC family. Zn(2+) serves as cofactor.

The enzyme catalyses 7-carboxy-7-deazaguanine + NH4(+) + ATP = 7-cyano-7-deazaguanine + ADP + phosphate + H2O + H(+). The protein operates within purine metabolism; 7-cyano-7-deazaguanine biosynthesis. Its function is as follows. Catalyzes the ATP-dependent conversion of 7-carboxy-7-deazaguanine (CDG) to 7-cyano-7-deazaguanine (preQ(0)). The sequence is that of 7-cyano-7-deazaguanine synthase from Syntrophus aciditrophicus (strain SB).